The sequence spans 272 residues: ATP synthase subunit delta (272 aa).

Belongs to the ATPase delta chain family. As to quaternary structure, F-type ATPases have 2 components, F(1) - the catalytic core - and F(0) - the membrane proton channel. F(1) has five subunits: alpha(3), beta(3), gamma(1), delta(1), epsilon(1). F(0) has three main subunits: a(1), b(2) and c(10-14). The alpha and beta chains form an alternating ring which encloses part of the gamma chain. F(1) is attached to F(0) by a central stalk formed by the gamma and epsilon chains, while a peripheral stalk is formed by the delta and b chains.

It localises to the cell membrane. Functionally, f(1)F(0) ATP synthase produces ATP from ADP in the presence of a proton or sodium gradient. F-type ATPases consist of two structural domains, F(1) containing the extramembraneous catalytic core and F(0) containing the membrane proton channel, linked together by a central stalk and a peripheral stalk. During catalysis, ATP synthesis in the catalytic domain of F(1) is coupled via a rotary mechanism of the central stalk subunits to proton translocation. In terms of biological role, this protein is part of the stalk that links CF(0) to CF(1). It either transmits conformational changes from CF(0) to CF(1) or is implicated in proton conduction. The chain is ATP synthase subunit delta from Corynebacterium urealyticum (strain ATCC 43042 / DSM 7109).